Here is a 127-residue protein sequence, read N- to C-terminus: Large ribosomal subunit protein uL24 (127 aa).

The protein belongs to the universal ribosomal protein uL24 family. As to quaternary structure, component of the large ribosomal subunit. Mature ribosomes consist of a small (40S) and a large (60S) subunit. The 40S subunit contains about 32 different proteins and 1 molecule of RNA (18S). The 60S subunit contains 45 different proteins and 3 molecules of RNA (25S, 5.8S and 5S).

It is found in the cytoplasm. In terms of biological role, component of the ribosome, a large ribonucleoprotein complex responsible for the synthesis of proteins in the cell. The small ribosomal subunit (SSU) binds messenger RNAs (mRNAs) and translates the encoded message by selecting cognate aminoacyl-transfer RNA (tRNA) molecules. The large subunit (LSU) contains the ribosomal catalytic site termed the peptidyl transferase center (PTC), which catalyzes the formation of peptide bonds, thereby polymerizing the amino acids delivered by tRNAs into a polypeptide chain. The nascent polypeptides leave the ribosome through a tunnel in the LSU and interact with protein factors that function in enzymatic processing, targeting, and the membrane insertion of nascent chains at the exit of the ribosomal tunnel. The protein is Large ribosomal subunit protein uL24 of Candida albicans (strain SC5314 / ATCC MYA-2876) (Yeast).